Reading from the N-terminus, the 506-residue chain is 2-isopropylmalate synthase (506 aa).

The 263-residue stretch at 4–266 (ILFMDTTLRD…EPSMTLKEIK (263 aa)) folds into the Pyruvate carboxyltransferase domain. 4 residues coordinate Mn(2+): Asp-13, His-201, His-203, and Asn-237. The segment at 390 to 506 (NITQLQVHFV…KLKSFIQLVK (117 aa)) is regulatory domain.

It belongs to the alpha-IPM synthase/homocitrate synthase family. LeuA type 1 subfamily. As to quaternary structure, homodimer. Mn(2+) serves as cofactor.

The protein localises to the cytoplasm. The enzyme catalyses 3-methyl-2-oxobutanoate + acetyl-CoA + H2O = (2S)-2-isopropylmalate + CoA + H(+). Its pathway is amino-acid biosynthesis; L-leucine biosynthesis; L-leucine from 3-methyl-2-oxobutanoate: step 1/4. In terms of biological role, catalyzes the condensation of the acetyl group of acetyl-CoA with 3-methyl-2-oxobutanoate (2-ketoisovalerate) to form 3-carboxy-3-hydroxy-4-methylpentanoate (2-isopropylmalate). This Bacillus anthracis (strain A0248) protein is 2-isopropylmalate synthase.